Reading from the N-terminus, the 436-residue chain is Hydrolyase ccsE (436 aa).

Catalysis depends on S249, which acts as the Nucleophile.

It belongs to the AB hydrolase superfamily. FUS2 hydrolase family. Homodimer.

The protein operates within mycotoxin biosynthesis. Its function is as follows. Hydrolyase; part of the gene cluster that mediates the biosynthesis of a family of the mycotoxins cytochalasins E and K. The hybrid PKS-NRPS synthetase ccsA and the enoyl reductase ccsC are responsible for fusion of phenylalanine with an octaketide backbone and subsequent release of the stable tetramic acid precursor. The polyketide synthase module (PKS) of the PKS-NRPS ccsA is responsible for the synthesis of the octaketide backbone. The downstream nonribosomal peptide synthetase (NRPS) amidates the carboxyl end of the octaketide with a phenylalanine. A reductase-like domain (R) at the C-terminus catalyzes the reductive release of the polyketide-amino acid intermediate. Because ccsA lacks a designated enoylreductase (ER) domain, the required activity is provided the enoyl reductase ccsC. Upon formation of the 11-membered carbocycle-fused perhydroisoindolone intermediate, a number of oxidative steps are required to afford the final cytochalasin E and K, including two hydroxylations at C17 and C18, one alcohol oxidation at C17, one epoxidation at C6 and C7 and two Baeyer-Villiger oxidations. The oxidative modification at C17, C18 and the C6-C7 epoxidation are likely to be catalyzed by the two cytochrome P450 oxygenases ccsD and ccsG. CcsD may be responsible for the epoxidation of the C6-C7 double bond. CcsG may be responsible for the successive oxidative modifications at C17 and C18. The double Baeyer-Villiger oxidations of ketocytochalasin to precytochalasin and cytochalasin Z(16) are among the final steps leading to cytochalasin E and K and are catalyzed by ccsB. The first oxygen insertion step follows that of the classic BVMO mechanism, generating the ester precytochalasin. Release of precytochalasin into an aqueous environment can generate the shunt product iso-precytochalasin through spontaneous isomerization. Alternatively, precytochalasin can undergo further oxidation by ccsB to yield the in-line carbonate-containing cytochalasin Z(16). Cytochalasin Z(16) is a precursor to cytochalasin E and cytochalasin K, whereas iso-precytochalasin is a precursor to cytochalasin Z(17) and rosellichalasin. The hydrolyase ccsE may catalyze hydrolysis of epoxide bond in cytochalasin E to afford cytochalasin K. The function of ccsF has not been assigned but it may play a role in post-PKS-NRPS biosynthetic step, resistance or transport of cytochalasins and related PKS-NRPS products. In Aspergillus clavatus (strain ATCC 1007 / CBS 513.65 / DSM 816 / NCTC 3887 / NRRL 1 / QM 1276 / 107), this protein is Hydrolyase ccsE.